The primary structure comprises 227 residues: MAPYHIRKYQDSDHRSVVDLFRRGMEEHIPATFRHMLLLPRTLLLLLGVPLTLFLASGSWLLVLLSILTLFLSLWFLAKYTWEKHVMNCLHTDMADITRTYMSSHSSCFWVAESRGQTVGMVAARPVKDPLLQKKQLQLLHLSVSLQHRREGLGKAMVRTVLQFAQMQGFSEVVLSTSMLQYAALALYQGMGFQKTGETFYTYLSRLRKSPMINLKYSLTSPWEGDL.

Transmembrane regions (helical) follow at residues 36–56 (MLLL…LFLA) and 58–78 (GSWL…WFLA). An N-acetyltransferase domain is found at 61 to 220 (LLVLLSILTL…PMINLKYSLT (160 aa)).

The protein belongs to the camello family.

Its subcellular location is the membrane. The catalysed reaction is L-lysyl-[protein] + acetyl-CoA = N(6)-acetyl-L-lysyl-[protein] + CoA + H(+). Its function is as follows. Has histone acetyltransferase activity in vitro, with specificity for histone H4. This is N-acetyltransferase family 8 member 7 from Mus musculus (Mouse).